Here is a 1109-residue protein sequence, read N- to C-terminus: Protein phosphatase 1 regulatory subunit 3A (1109 aa).

Phosphoserine; by GSK3 occurs at positions 40 and 44. S48 is modified (phosphoserine; by PKA and ISPK). Position 51 is a phosphoserine (S51). T58 bears the Phosphothreonine mark. Residues 64 to 67 carry the PP1-binding motif motif; the sequence is RRVS. S67 is subject to Phosphoserine; by PKA. In terms of domain architecture, CBM21 spans 124-232; that stretch reads QLQVQKAMLE…NNNGTNYTLV (109 aa). Over residues 236–251 the composition is skewed to basic and acidic residues; sequence KEPEPEPGKPLEEAPS. Disordered stretches follow at residues 236-278, 340-424, 436-455, and 493-517; these read KEPE…NFEN, GKNT…SDGS, DDNA…CSFP, and YFKK…KEKR. Polar residues-rich tracts occupy residues 340–352, 360–384, and 396–406; these read GKNT…SNIP, KNQS…SAES, and YSSGNESSHQP. Residue S843 is modified to Phosphoserine. 2 disordered regions span residues 945–985 and 1011–1048; these read SATE…RKEK and SREN…ETQD. The span at 951–963 shows a compositional bias: polar residues; sequence YNCSPTRETQGQP. Basic and acidic residues-rich tracts occupy residues 966–985 and 1011–1034; these read KPEE…RKEK and SREN…KEFE. The span at 1035–1048 shows a compositional bias: polar residues; that stretch reads SSASSSLPVQETQD. Residues 1066 to 1086 traverse the membrane as a helical segment; it reads FLLFLMFLVTVYHYDLMIGLA.

Interacts with PPP1CC catalytic subunit of PP1, and associates with glycogen. Phosphorylation at Ser-48 by ISPK stimulates the dephosphorylation of glycogen synthase and phosphorylase kinase. As to expression, skeletal muscle, diaphragm and cardiac muscle.

Its subcellular location is the membrane. Functionally, seems to act as a glycogen-targeting subunit for PP1. PP1 is essential for cell division, and participates in the regulation of glycogen metabolism, muscle contractility and protein synthesis. Plays an important role in glycogen synthesis but is not essential for insulin activation of glycogen synthase. The polypeptide is Protein phosphatase 1 regulatory subunit 3A (PPP1R3A) (Oryctolagus cuniculus (Rabbit)).